The sequence spans 418 residues: MLLPVPLLLGLLGLAAAEPVVYFKEQFLDGDGWTERWIESKHKSDFGKFVLSSGKFYGDQEKDKGLQTSQDARFYALSARFEPFSNKGQPLVVQFTVKHEQNIDCGGGYVKLFPAGLDQKDMHGDSEYNIMFGPDICGPGTKKVHVIFNYKGKNVLINKDIRCKDDEFTHLYTLIVRPDNTYEVKIDNSQVESGSLEDDWDFLPPKKIKDPDASKPEDWDERAKIDDPTDSKPEDWDKPEHIPDPDAKKPEDWDEEMDGEWEPPVIQNPEYKGEWKPRQIDNPDYKGTWIHPEIDNPEYSPDANIYAYDSFAVLGLDLWQVKSGTIFDNFLITNDEAYAEEFGNETWGVTKTAEKQMKDKQDEEQRLKEEEEEKKRKEEEEAEEDEEDKDDKEDEDEDEEDKDEEEEEAAAGQAKDEL.

Positions 1–17 are cleaved as a signal peptide; that stretch reads MLLPVPLLLGLLGLAAA. The interval 18-197 is N-domain; the sequence is EPVVYFKEQF…NSQVESGSLE (180 aa). Gln26 is a binding site for Ca(2+). Lys48 carries the N6-acetyllysine modification. Positions 62 and 64 each coordinate Ca(2+). The residue at position 64 (Lys64) is an N6-(2-hydroxyisobutyryl)lysine. Cysteines 105 and 137 form a disulfide. An alpha-D-glucoside is bound by residues Tyr109, Lys111, Tyr128, and Asp135. The residue at position 159 (Lys159) is an N6-acetyllysine. A 1-1 repeat occupies 191 to 202; sequence VESGSLEDDWDF. The 4 X approximate repeats stretch occupies residues 191-255; sequence VESGSLEDDW…DAKKPEDWDE (65 aa). Positions 193-277 are disordered; that stretch reads SGSLEDDWDF…NPEYKGEWKP (85 aa). The tract at residues 198–308 is P-domain; the sequence is DDWDFLPPKK…YSPDANIYAY (111 aa). Over residues 207–251 the composition is skewed to basic and acidic residues; that stretch reads KIKDPDASKPEDWDERAKIDDPTDSKPEDWDKPEHIPDPDAKKPE. Lys209 bears the N6-acetyllysine mark. 6 repeat units span residues 210–221, 227–238, 244–255, 259–269, 273–283, and 287–297. An interaction with PPIB region spans residues 237–270; the sequence is DKPEHIPDPDAKKPEDWDEEMDGEWEPPVIQNPE. A compositionally biased stretch (acidic residues) spans 252–261; it reads DWDEEMDGEW. Residues 259-297 form a 3 X approximate repeats region; the sequence is GEWEPPVIQNPEYKGEWKPRQIDNPDYKGTWIHPEIDNP. The tract at residues 309 to 418 is C-domain; sequence DSFAVLGLDL…AAAGQAKDEL (110 aa). An alpha-D-glucoside is bound at residue Asp317. Asp328 is a Ca(2+) binding site. The disordered stretch occupies residues 349 to 418; sequence VTKTAEKQMK…AAAGQAKDEL (70 aa). Positions 352–379 are enriched in basic and acidic residues; the sequence is TAEKQMKDKQDEEQRLKEEEEEKKRKEE. The segment covering 380–409 has biased composition (acidic residues); sequence EEAEEDEEDKDDKEDEDEDEEDKDEEEEEA. The Prevents secretion from ER motif lies at 415–418; the sequence is KDEL.

The protein belongs to the calreticulin family. As to quaternary structure, monomer. Component of an EIF2 complex at least composed of CELF1/CUGBP1, CALR, CALR3, EIF2S1, EIF2S2, HSP90B1 and HSPA5. Interacts with PDIA3/ERp57 and SPACA9. Interacts with TRIM21. Interacts with NR3C1. Interacts with PPIB. Interacts (via P-domain) with PDIA5. Interacts with CLCC1.

Its subcellular location is the endoplasmic reticulum lumen. The protein localises to the cytoplasm. It localises to the cytosol. It is found in the secreted. The protein resides in the extracellular space. Its subcellular location is the extracellular matrix. The protein localises to the cell surface. It localises to the sarcoplasmic reticulum lumen. It is found in the cytoplasmic vesicle. The protein resides in the secretory vesicle. Its subcellular location is the cortical granule. The protein localises to the cytolytic granule. Functionally, calcium-binding chaperone that promotes folding, oligomeric assembly and quality control in the endoplasmic reticulum (ER) via the calreticulin/calnexin cycle. This lectin interacts transiently with almost all of the monoglucosylated glycoproteins that are synthesized in the ER. Interacts with the DNA-binding domain of NR3C1 and mediates its nuclear export. Involved in maternal gene expression regulation. May participate in oocyte maturation via the regulation of calcium homeostasis. Present in the cortical granules of non-activated oocytes, is exocytosed during the cortical reaction in response to oocyte activation and might participate in the block to polyspermy. This chain is Calreticulin (CALR), found in Oryctolagus cuniculus (Rabbit).